Here is a 151-residue protein sequence, read N- to C-terminus: UPF0178 protein mma_0312 (151 aa).

The protein belongs to the UPF0178 family.

In Janthinobacterium sp. (strain Marseille) (Minibacterium massiliensis), this protein is UPF0178 protein mma_0312.